A 109-amino-acid chain; its full sequence is Small ribosomal subunit protein uS15c (109 aa).

It belongs to the universal ribosomal protein uS15 family. Part of the 30S ribosomal subunit.

It localises to the plastid. The protein resides in the chloroplast. In Trachelium caeruleum (Blue throatwort), this protein is Small ribosomal subunit protein uS15c (rps15-A).